We begin with the raw amino-acid sequence, 298 residues long: Calcium-binding protein 1 (298 aa).

Residues 1-10 (MSSHIAKSES) show a composition bias toward basic and acidic residues. A disordered region spans residues 1–131 (MSSHIAKSES…APAGTPEADP (131 aa)). The N-myristoyl glycine moiety is linked to residue Ser-2. His-4 carries S-palmitoyl cysteine lipidation. The span at 11 to 25 (KTSLLKAAAASGGSR) shows a compositional bias: low complexity. EF-hand domains lie at 153 to 188 (EEIE…MGYM), 207 to 224 (GHVD…KLLA), 230 to 265 (IGVK…LLGH), and 267 to 298 (VGHR…MMSR). Residues Asp-166, Asp-168, Asp-170, Tyr-172, and Asp-177 each coordinate Ca(2+). The Ca(2+) site is built by Asp-243, Asn-245, Asp-247, and Glu-249. Phosphoserine is present on Ser-251. Residues Glu-254, Asp-280, Asn-282, Asp-284, Arg-286, and Glu-291 each contribute to the Ca(2+) site.

In terms of assembly, interacts with ITPR1, ITPR2 and ITPR3. The strength of this interaction inversely correlates with calcium concentration. Interacts with CACNA1A (via C-terminal CDB motif) in the pre- and postsynaptic membranes. Interacts with CACNA1C. Interacts with CACNA1D. Interacts (via EF-hands 1 and 2) at microtubules with MAP1LC3B. Interacts (via EF-hands 1 and 2) with NSMF (via the central NLS-containing motif region), the interaction occurs in a calcium dependent manner after synaptic NMDA receptor stimulation and prevents nuclear import of NSMF. Interacts with MYO1C and TRPC5. Interacts with SPACA9. In terms of processing, phosphorylated. The phosphorylation regulates the activity. Somatodendritic compartment of neurons. Restricted expression in retina to a subpopulation of amacrine, bipolar, and ganglion cells. According to PubMed:11906216, expression is heterogeneous within brain regions and their major cell types and does not match with those of marker proteins for characterized neuronal subpopulations. Isoform 2: Minor isoform expressed in the brain, in the granule cell layer of the cerebellum, at low level. Not developmentally regulated. Isoform 3: Minor isoform expressed in the brain, in the granule cell layer. of the cerebellum, at low level. Not developmentally regulated.

The protein localises to the cytoplasm. It localises to the cytoskeleton. In terms of biological role, modulates calcium-dependent activity of inositol 1,4,5-triphosphate receptors (ITPRs). Inhibits agonist-induced intracellular calcium signaling. Enhances inactivation and does not support calcium-dependent facilitation of voltage-dependent P/Q-type calcium channels. Causes calcium-dependent facilitation and inhibits inactivation of L-type calcium channels by binding to the same sites as calmodulin in the C-terminal domain of CACNA1C, but has an opposite effect on channel function. Suppresses the calcium-dependent inactivation of CACNA1D. Inhibits TRPC5 channels. Prevents NMDA receptor-induced cellular degeneration. Required for the normal transfer of light signals through the retina. This chain is Calcium-binding protein 1 (Cabp1), found in Rattus norvegicus (Rat).